The following is a 580-amino-acid chain: Protein O-linked-mannose beta-1,4-N-acetylglucosaminyltransferase 2 (580 aa).

Residues 1–4 (MHLS) lie on the Cytoplasmic side of the membrane. The chain crosses the membrane as a helical; Signal-anchor for type II membrane protein span at residues 5–25 (AVFNALLVSVLAAVLWKHVRL). The Lumenal portion of the chain corresponds to 26–580 (REHAATLEEE…PFADVLVCNT (555 aa)). Asn-99 and Asn-276 each carry an N-linked (GlcNAc...) asparagine glycan. One can recognise a Fibronectin type-III domain in the interval 488-580 (ARCQASVHGA…PFADVLVCNT (93 aa)).

The protein belongs to the glycosyltransferase 61 family. Highly expressed in the brain, muscle, heart, and kidney in both fetus and adult. In the brain, highest expression in the cortex and cerebellum. Highly expressed in the pancreas.

It localises to the endoplasmic reticulum membrane. The enzyme catalyses 3-O-(alpha-D-mannosyl)-L-threonyl-[protein] + UDP-N-acetyl-alpha-D-glucosamine = 3-O-(N-acetyl-beta-D-glucosaminyl-(1-&gt;4)-alpha-D-mannosyl)-L-threonyl-[protein] + UDP + H(+). It participates in protein modification; protein glycosylation. In terms of biological role, O-linked mannose beta-1,4-N-acetylglucosaminyltransferase that transfers UDP-N-acetyl-D-glucosamine to the 4-position of the mannose to generate N-acetyl-D-glucosamine-beta-1,4-O-D-mannosylprotein. Involved in the biosynthesis of the phosphorylated O-mannosyl trisaccharide (N-acetylgalactosamine-beta-3-N-acetylglucosamine-beta-4-(phosphate-6-)mannose), a carbohydrate structure present in alpha-dystroglycan (DAG1), which is required for binding laminin G-like domain-containing extracellular proteins with high affinity. In Homo sapiens (Human), this protein is Protein O-linked-mannose beta-1,4-N-acetylglucosaminyltransferase 2 (POMGNT2).